The sequence spans 190 residues: Pyridoxal 5'-phosphate synthase subunit PdxT (190 aa).

46 to 48 (GES) provides a ligand contact to L-glutamine. The active-site Nucleophile is Cys-78. L-glutamine contacts are provided by residues Arg-105 and 133-134 (IR). Catalysis depends on charge relay system residues His-169 and Glu-171.

This sequence belongs to the glutaminase PdxT/SNO family. In terms of assembly, in the presence of PdxS, forms a dodecamer of heterodimers. Only shows activity in the heterodimer.

The catalysed reaction is aldehydo-D-ribose 5-phosphate + D-glyceraldehyde 3-phosphate + L-glutamine = pyridoxal 5'-phosphate + L-glutamate + phosphate + 3 H2O + H(+). It catalyses the reaction L-glutamine + H2O = L-glutamate + NH4(+). It functions in the pathway cofactor biosynthesis; pyridoxal 5'-phosphate biosynthesis. Its function is as follows. Catalyzes the hydrolysis of glutamine to glutamate and ammonia as part of the biosynthesis of pyridoxal 5'-phosphate. The resulting ammonia molecule is channeled to the active site of PdxS. The sequence is that of Pyridoxal 5'-phosphate synthase subunit PdxT from Niallia circulans (Bacillus circulans).